A 513-amino-acid chain; its full sequence is MERPVTELVLNPGAVPLAEWKAIYRGASARLAESAWPVIAESAAAVQRILAKGEPVYGINTGFGKLASVRIGDADLETLQRNIVLSHAAGVGEPSPVPVIRLMMALKLASLAQGASGVRVETVRMLEEMLVEGLTPVVPCQGSVGASGDLAPLSHMAATMIGVGEIFVGGQRLPAAQALAQAGLEPLTLGPKEGLALLNGTQFSTANALAGLFEAERLFQSALVTGALSTEAAKGSDTPFDPRIHTLRRHVGQIETAAALRALMSASEIRASHLKEDERVQDPYCLRCQPQVMGAALDILRQAATTLATEANCVSDNPLIFPEADEALSGGNFHAEPVAFAADMIALAVCEIGSIAERRIAMLVDPALSGLPAFLTPKPGLNSGFMIPQVTAAALVSENKQRAYPASVDSIPTSANQEDHVSMAAHGARRLLAMVENADAVLGIELLAAAQGCDFHAPLRSSAALEAVRALTRSKVPHLSDDRHFHPDMEAANTLVRSGAVIAAVGALPGVTA.

Residues 146–148 (ASG) constitute a cross-link (5-imidazolinone (Ala-Gly)). At Ser147 the chain carries 2,3-didehydroalanine (Ser).

Belongs to the PAL/histidase family. Post-translationally, contains an active site 4-methylidene-imidazol-5-one (MIO), which is formed autocatalytically by cyclization and dehydration of residues Ala-Ser-Gly.

The protein resides in the cytoplasm. The enzyme catalyses L-histidine = trans-urocanate + NH4(+). The protein operates within amino-acid degradation; L-histidine degradation into L-glutamate; N-formimidoyl-L-glutamate from L-histidine: step 1/3. The sequence is that of Histidine ammonia-lyase from Caulobacter vibrioides (strain NA1000 / CB15N) (Caulobacter crescentus).